The sequence spans 471 residues: L-lysine 2,3-aminomutase (471 aa).

One can recognise a Radical SAM core domain in the interval 120–332 (HRYPDRVLFL…GLRGHTSGYA (213 aa)). Residues C134, C138, and C141 each coordinate [4Fe-4S] cluster. K346 is subject to N6-(pyridoxal phosphate)lysine.

This sequence belongs to the radical SAM superfamily. KamA family. In terms of assembly, homotetramer. [4Fe-4S] cluster is required as a cofactor. The cofactor is pyridoxal 5'-phosphate.

The catalysed reaction is L-lysine = (3S)-3,6-diaminohexanoate. It participates in amino-acid degradation; L-lysine degradation via acetate pathway. Functionally, catalyzes the interconversion of L-alpha-lysine and L-beta-lysine. The protein is L-lysine 2,3-aminomutase (kamA) of Bacillus subtilis (strain 168).